The following is a 309-amino-acid chain: Tagatose-6-phosphate kinase (309 aa).

It belongs to the carbohydrate kinase PfkB family. LacC subfamily.

It carries out the reaction D-tagatofuranose 6-phosphate + ATP = D-tagatofuranose 1,6-bisphosphate + ADP + H(+). The protein operates within carbohydrate metabolism; D-tagatose 6-phosphate degradation; D-glyceraldehyde 3-phosphate and glycerone phosphate from D-tagatose 6-phosphate: step 1/2. This chain is Tagatose-6-phosphate kinase, found in Streptococcus pyogenes serotype M1.